The primary structure comprises 556 residues: Arginine--tRNA ligase (556 aa).

The short motif at 132 to 142 is the 'HIGH' region element; the sequence is ANPTGDLHLGH.

This sequence belongs to the class-I aminoacyl-tRNA synthetase family. In terms of assembly, monomer.

The protein resides in the cytoplasm. The enzyme catalyses tRNA(Arg) + L-arginine + ATP = L-arginyl-tRNA(Arg) + AMP + diphosphate. The polypeptide is Arginine--tRNA ligase (Bacillus velezensis (strain DSM 23117 / BGSC 10A6 / LMG 26770 / FZB42) (Bacillus amyloliquefaciens subsp. plantarum)).